Here is a 642-residue protein sequence, read N- to C-terminus: MSLSKLDSEKLTIEDVQTSSSSCRREINTTTYDDYILSIQTSEKQNQEHFVLTFPKTPMPDKKKRSGPSELEVAVPIQVKRKIEKDQKPTHVWINQFLRDIFLKSSFSRPFITQAPFKYLYNPQNHYTMAESRKSKNDERRKTLKIKFRGKISSCVVNLEPMRTITNGEPEILGNTEKNPSKSSHKIKLPKTSNSTSETNLEYNNSKKTLEMSLRNGNKNSMNFVLKGNAATCCKDNPNTDSKKSVEEFSDDISECINSSNMDLMLRLNEFRAEFTDLDVWSTNCSQNNAKKPLKTGGKKERDSDIDSGGSKDAKKEGKKKGKRESRKKRNTESSDAESGDSKDGKKKSKHDKKNEIKKKKDTDSTGSGSGASMVSKKGKTEKKSTGKKSTGSTGSESVDSKSTNKVKKQVKKGVMKKAVSTDSESDASSKKSKKDEKKENKGRKKKPIKDTESTDADSESEGDSTGKKNEKKDKKITKKGEKKDAKKNTASSESESDLGVNKKKTKIKEIVSFSDSTSDSYSKAGRRKNVRRSDSESEDSSGFRVLKSTDDSEASSTDSKTGMPGMRRGFRSLSKKTTFNERGKRSVTGRIPSSRERLPFPPCEPFRASPKPVHVCKCKESPSPKARYAPLPGVEWIHKLL.

2 disordered regions span residues 167 to 203 (NGEP…NLEY) and 284 to 607 (NCSQ…CEPF). Positions 191–203 (KTSNSTSETNLEY) are enriched in polar residues. A run of 8 repeats spans residues 294–313 (LKTG…GSKD), 314–344 (AKKE…DSKD), 345–391 (GKKK…KKST), 392–432 (GSTG…SSKK), 433–464 (SKKD…SEGD), 465–500 (STGK…SDLG), 501–526 (VNKK…SKAG), and 527–543 (RRKN…DSSG). The segment covering 298-316 (GKKERDSDIDSGGSKDAKK) has biased composition (basic and acidic residues). The span at 317 to 330 (EGKKKGKRESRKKR) shows a compositional bias: basic residues. The span at 353–364 (KKNEIKKKKDTD) shows a compositional bias: basic and acidic residues. A compositionally biased stretch (low complexity) spans 388 to 404 (KKSTGSTGSESVDSKST). Over residues 405 to 416 (NKVKKQVKKGVM) the composition is skewed to basic residues. The span at 428-440 (ASSKKSKKDEKKE) shows a compositional bias: basic and acidic residues. Residues 454–463 (STDADSESEG) show a composition bias toward acidic residues. The segment covering 465-488 (STGKKNEKKDKKITKKGEKKDAKK) has biased composition (basic and acidic residues). Residues 513–523 (SFSDSTSDSYS) are compositionally biased toward low complexity. The tract at residues 527 to 543 (RRKNVRRSDSESEDSSG) is 8 X approximate tandem repeats.

As to quaternary structure, interacts with proteins of spermatozoa head including ACTL7A, CCIN, FAM209 and SPACA1; the interactions may be necessary for proper acrosome attachment to the nuclear envelope. As to expression, testis.

The protein resides in the cytoplasm. It is found in the cytoskeleton. The protein localises to the perinuclear theca. Its subcellular location is the calyx. Functionally, plays a role in the establishment of normal sperm morphology during spermatogenesis and is required for acrosome attachment to the nuclear envelope. The chain is Cylicin-1 from Mus musculus (Mouse).